We begin with the raw amino-acid sequence, 304 residues long: UDP-3-O-acyl-N-acetylglucosamine deacetylase (304 aa).

Residues His-78, His-237, and Asp-241 each coordinate Zn(2+). The active-site Proton donor is the His-264.

The protein belongs to the LpxC family. Requires Zn(2+) as cofactor.

The enzyme catalyses a UDP-3-O-[(3R)-3-hydroxyacyl]-N-acetyl-alpha-D-glucosamine + H2O = a UDP-3-O-[(3R)-3-hydroxyacyl]-alpha-D-glucosamine + acetate. Its pathway is glycolipid biosynthesis; lipid IV(A) biosynthesis; lipid IV(A) from (3R)-3-hydroxytetradecanoyl-[acyl-carrier-protein] and UDP-N-acetyl-alpha-D-glucosamine: step 2/6. Functionally, catalyzes the hydrolysis of UDP-3-O-myristoyl-N-acetylglucosamine to form UDP-3-O-myristoylglucosamine and acetate, the committed step in lipid A biosynthesis. The protein is UDP-3-O-acyl-N-acetylglucosamine deacetylase of Polynucleobacter asymbioticus (strain DSM 18221 / CIP 109841 / QLW-P1DMWA-1) (Polynucleobacter necessarius subsp. asymbioticus).